A 997-amino-acid polypeptide reads, in one-letter code: Protein HIR2 (997 aa).

WD repeat units follow at residues 10 to 48 (GISG…DTAF), 117 to 152 (VSQS…TRSA), 153 to 194 (NKKE…VVYH), 274 to 319 (VHSP…PLFA), and 323 to 362 (ISDS…LGKT). Residues 408 to 584 (ADNSSNILST…RKPKEDALGN (177 aa)) form a disordered region. Over residues 409–446 (DNSSNILSTDTNTNEKNLSTVNTTEPQTNSQSSSYNNK) the composition is skewed to polar residues. Over residues 464 to 480 (SDEKAKNLEARPIEAKS) the composition is skewed to basic and acidic residues. Positions 491–501 (SKSSSVTTSDN) are enriched in polar residues. The segment covering 518–538 (TEKKTKPDKKSIKSENGESKV) has biased composition (basic and acidic residues). Polar residues predominate over residues 539 to 567 (NKAQNTISPKESNTTDNKSTTPDFKNPSY). 2 WD repeats span residues 665 to 706 (LFQD…IIPP) and 708 to 745 (TIGV…LEFP).

Belongs to the WD repeat HIR1 family.

The protein resides in the nucleus. Its function is as follows. Required for replication-independent chromatin assembly and for the periodic repression of histone gene transcription during the cell cycle. The polypeptide is Protein HIR2 (HIR2) (Candida glabrata (strain ATCC 2001 / BCRC 20586 / JCM 3761 / NBRC 0622 / NRRL Y-65 / CBS 138) (Yeast)).